Here is a 449-residue protein sequence, read N- to C-terminus: Gamma-aminobutyric acid receptor subunit delta (449 aa).

A signal peptide spans 1–24 (MDVLGWLLLPLLLLCTQPHHGARA). Over 25–251 (MNDIGDYVGS…QLRRNRGVYI (227 aa)) the chain is Extracellular. N-linked (GlcNAc...) asparagine glycans are attached at residues N103 and N106. C164 and C178 are joined by a disulfide. The helical transmembrane segment at 252–271 (IQSYMPSVLLVAMSWVSFWI) threads the bilayer. The Cytoplasmic portion of the chain corresponds to 272–275 (SQAA). The chain crosses the membrane as a helical span at residues 276–298 (VPARVSLGITTVLTMTTLMVSAR). The Extracellular segment spans residues 299–308 (SSLPRASAIK). The helical transmembrane segment at 309 to 331 (ALDVYFWICYVFVFAALVEYAFA) threads the bilayer. Over 332–423 (HFNADYRKKR…SRLKPIDADT (92 aa)) the chain is Cytoplasmic. S390 bears the Phosphoserine mark. Residues 424 to 446 (IDIYARAVFPAAFAAVNIIYWAA) traverse the membrane as a helical segment. Over 447–449 (YTM) the chain is Extracellular.

It belongs to the ligand-gated ion channel (TC 1.A.9) family. Gamma-aminobutyric acid receptor (TC 1.A.9.5) subfamily. GABRD sub-subfamily. Heteropentamer, formed by a combination of alpha (GABRA1-6), beta (GABRB1-3), gamma (GABRG1-3), delta (GABRD), epsilon (GABRE), rho (GABRR1-3), pi (GABRP) and theta (GABRQ) chains, each subunit exhibiting distinct physiological and pharmacological properties. Found in the brain, in cerebellar granule cells. Expressed in lungs, in alveolar epithelium.

The protein resides in the cell membrane. The enzyme catalyses chloride(in) = chloride(out). In terms of biological role, delta subunit of the heteropentameric ligand-gated chloride channel gated by gamma-aminobutyric acid (GABA), a major inhibitory neurotransmitter in the brain. GABA-gated chloride channels, also named GABA(A) receptors (GABAAR), consist of five subunits arranged around a central pore and contain GABA active binding site(s) located at the alpha and beta subunit interface(s). When activated by GABA, GABAARs selectively allow the flow of chloride anions across the cell membrane down their electrochemical gradient. GABAARs containing delta/GABRD subunits are predominantly expressed and located in extrasynaptic or perisynaptic positions on hippocampus and cerebellar granule cells, and contribute to the tonic GABAergic inhibition. GABAAR containing alpha-4-beta-3-delta subunits can simultaneously bind GABA and histamine where histamine binds at the interface of two neighboring beta subunits, which may be involved in the regulation of sleep and wakefulness. This Rattus norvegicus (Rat) protein is Gamma-aminobutyric acid receptor subunit delta.